The chain runs to 3573 residues: Zinc finger homeobox protein 4 (3573 aa).

The span at 1 to 28 (METCDSPTISRQENGQSTSKLCGTTQLD) shows a compositional bias: polar residues. 3 disordered regions span residues 1 to 54 (METC…LRTD), 425 to 479 (LSHS…DTYS), and 522 to 606 (TSSS…GSPG). Composition is skewed to basic and acidic residues over residues 39–54 (EPDRENSSTDDNLRTD) and 434–452 (KLSESKDQENNCERQKETN). The span at 468-479 (EPVEEEDEDTYS) shows a compositional bias: acidic residues. A compositionally biased stretch (polar residues) spans 585-599 (SVTPHQHSFTPSTPS). C2H2-type zinc fingers lie at residues 609–632 (IECPKCDTVLGSSRSLGGHMTMMH), 640–663 (LKCPKCNWHYKYQQTLEAHMKEKH), and 695–719 (FRCEVCNYSTTTKGNLSIHMQSDKH). A C2H2-type 4; degenerate zinc finger spans residues 763–785 (WRCEVCDYETNVARNLRIHMTSE). 3 consecutive C2H2-type zinc fingers follow at residues 913-937 (YQCKLCNYNTQLKANFQLHCKTDKH), 969-991 (LKCNACDYYTNSVDKLRLHTTNH), and 1017-1041 (YYCALCDYSTKVKLNLVQHVRSVKH). Residues 1096–1132 (GEDTEGSAKSTSVAIGDDKDSSERDNTEAKKSSKDSV) are disordered. Over residues 1111 to 1129 (GDDKDSSERDNTEAKKSSK) the composition is skewed to basic and acidic residues. 2 consecutive C2H2-type zinc fingers follow at residues 1168–1191 (YQCPYCNYNSRDPNRIQMHVLSQH) and 1197–1220 (ICCPLCQDVLSNKMHLQLHLTHLH). A disordered region spans residues 1250–1340 (AASEKSERDT…EQQKKQQLSV (91 aa)). The span at 1277 to 1306 (VDEKSTPGTDESKPGMEIKSEEQKPPKESA) shows a compositional bias: basic and acidic residues. The segment covering 1322-1340 (TDSMPDQLNEQQKKQQLSV) has biased composition (polar residues). C2H2-type zinc fingers lie at residues 1348–1370 (YRCNHCSLAFKTMQKLQIHSQYH) and 1376–1399 (TMCSLCQRSFRTFQALKKHLEAGH). Residues 1442–1476 (YEMEQEGKASPVGSDSSSIPDDMGSEPKRTLPFRK) form a disordered region. 2 consecutive C2H2-type zinc fingers follow at residues 1492 to 1518 (YKCTVCKESFTQKNILLVHYNSVSHLH) and 1544 to 1568 (YKCSICNVAYSQSSTLEIHMRSVLH). 2 disordered regions span residues 1577-1596 (LEPSGNISSGNSVAGNVNSP) and 1795-1843 (YKES…IASG). The span at 1580–1596 (SGNISSGNSVAGNVNSP) shows a compositional bias: low complexity. The segment covering 1795–1830 (YKESEEISEKQEKPKQEFTNESEGLKENKDMKKPKS) has biased composition (basic and acidic residues). The segment at 1886–1909 (LECGTCSKLFSNILILKSHQEHVH) adopts a C2H2-type 14 zinc-finger fold. The interval 1933-2013 (YPISPSSPET…PSAPPQVQLP (81 aa)) is disordered. Composition is skewed to pro residues over residues 1940 to 1962 (PETPPPPPPPPPPPPPPPPPTPS) and 1980 to 2007 (LQAPPPTPPPPPPPPPPPPPPPPPPSAP). 2 DNA-binding regions (homeobox) span residues 2072–2131 (FKRP…RQRN) and 2169–2228 (KRSS…RKSY). The C2H2-type 15; degenerate zinc finger occupies 2255–2279 (YQCKKCSVVFPRIFDLITHQKKQCY). Disordered stretches follow at residues 2278–2300 (CYKDEDDDAQDESQTEDSMDASD) and 2318–2426 (SLAV…TPLQ). Residues 2281–2297 (DEDDDAQDESQTEDSMD) are compositionally biased toward acidic residues. Residues 2318 to 2334 (SLAVTAASSGSGSSTPL) show a composition bias toward low complexity. Over residues 2340–2357 (PEPEKASPKSESTEKPKP) the composition is skewed to basic and acidic residues. Composition is skewed to low complexity over residues 2360-2373 (TISKQTDTTSQSSK) and 2382-2413 (PSDPQPSASQPQQQKQSQIIGRPPSTSQTTPV). The C2H2-type 16 zinc-finger motif lies at 2436 to 2458 (YQCDQCTVAFPTLELWQEHQHMH). Positions 2499–2509 (LAQMPPQTGSS) are enriched in polar residues. The tract at residues 2499–2553 (LAQMPPQTGSSHAAHPATVSGSMKRKLDDKEDNNCSEKEGGNSGEDQHRDKRLRT) is disordered. The segment covering 2523–2547 (RKLDDKEDNNCSEKEGGNSGEDQHR) has biased composition (basic and acidic residues). A DNA-binding region (homeobox 3) is located at residues 2548–2607 (DKRLRTTITPEQLEILYEKYLLDSNPTRKMLDHIAREVGLKKRVVQVWFQNTRARERKGQ). The C2H2-type 17 zinc-finger motif lies at 2618-2641 (KRCPFCRALFKAKSALESHIRSRH). Disordered stretches follow at residues 2704–2788 (EMSP…PKPL) and 2820–2875 (FSEK…PGHK). Composition is skewed to polar residues over residues 2709–2718 (NLLSPSSFKA) and 2746–2773 (TSSINTAISDATTGDEGNNEMESTTGSS). The span at 2820 to 2829 (FSEKDGDHDQ) shows a compositional bias: basic and acidic residues. A DNA-binding region (homeobox 4) is located at residues 2874-2933 (HKRFRTQMSNLQLKVLKACFSDYRTPTMQECEMLGNEIGLPKRVVQVWFQNARAKEKKFK). The segment at 2952 to 2976 (PECSLCGVKYSARLSIRDHIFSKQH) adopts a C2H2-type 18; degenerate zinc-finger fold. Disordered stretches follow at residues 3060–3174 (PSSL…KHLK) and 3287–3343 (LQKQ…LDSK). Positions 3084-3104 (PTSATSSPALSLSSAPSKPLL) are enriched in low complexity. Residues 3105 to 3129 (QTPPPPPPPPPPPPPPPPPPPPPPS) are compositionally biased toward pro residues. The span at 3159 to 3174 (IKEEELEANKPEKHLK) shows a compositional bias: basic and acidic residues. Residues 3271-3316 (ALLQQYQQYQQNLQDSLQKQQKQQQEQQQKQVQAKSSKAENDQQQN) are a coiled coil. Low complexity predominate over residues 3287-3305 (LQKQQKQQQEQQQKQVQAK). Positions 3321–3343 (SETKEDRSSATESTKEEPQLDSK) are enriched in basic and acidic residues. A C2H2-type 19; degenerate zinc finger spans residues 3360-3384 (FICRKCQMMFTDEDAAVNHQKSFCY). The segment at 3404–3428 (YQCLACDVAISGNEALSQHLQSSLH) adopts a C2H2-type 20 zinc-finger fold. Disordered regions lie at residues 3449–3468 (HSVCSPNPNTTSTSQSAASS) and 3518–3543 (TSGVQTSLPTESCSDESDSELSQKLE). Residues 3453–3468 (SPNPNTTSTSQSAASS) show a composition bias toward low complexity.

It belongs to the krueppel C2H2-type zinc-finger protein family.

Its subcellular location is the nucleus. Its function is as follows. May play a role in neural and muscle differentiation. May be involved in transcriptional regulation. This chain is Zinc finger homeobox protein 4 (ZFHX4), found in Gallus gallus (Chicken).